Consider the following 215-residue polypeptide: MNQSILSPFGNTAEERVLNAINAFKNGTGVLVLDDEDRENEGDLIFPAETITPEQMAKLIRYGSGIVCLCITDERCQQLDLPPMVEHNNSVNKTAFTVTIEAAKGVSTGVSAADRVTTIQTAIADNAVLTDLHRPGHVFPLRAANGGVLTRRGHTEASVDLARLAGFKEAGVICEITNDDGTMARAPEIVEFAKKFGYSVLTIEDLVEYRLAHNI.

Residues 38-39, Asp-43, 151-155, and Glu-175 each bind D-ribulose 5-phosphate; these read RE and RRGHT. Glu-39 contacts Mg(2+). His-154 is a binding site for Mg(2+).

The protein belongs to the DHBP synthase family. Homodimer. It depends on Mg(2+) as a cofactor. Mn(2+) serves as cofactor.

It carries out the reaction D-ribulose 5-phosphate = (2S)-2-hydroxy-3-oxobutyl phosphate + formate + H(+). The protein operates within cofactor biosynthesis; riboflavin biosynthesis; 2-hydroxy-3-oxobutyl phosphate from D-ribulose 5-phosphate: step 1/1. In terms of biological role, catalyzes the conversion of D-ribulose 5-phosphate to formate and 3,4-dihydroxy-2-butanone 4-phosphate. The sequence is that of 3,4-dihydroxy-2-butanone 4-phosphate synthase from Haemophilus influenzae (strain ATCC 51907 / DSM 11121 / KW20 / Rd).